The chain runs to 364 residues: Fructose-bisphosphate aldolase C (364 aa).

Tyrosine 5 carries the phosphotyrosine modification. Phosphoserine occurs at positions 36, 39, and 45. Arginine 56 is a binding site for substrate. Residue lysine 111 is modified to N6-acetyllysine. Serine 132 is modified (phosphoserine). Lysine 147 lines the substrate pocket. The Proton acceptor role is filled by glutamate 188. The active-site Schiff-base intermediate with dihydroxyacetone-P is lysine 230.

This sequence belongs to the class I fructose-bisphosphate aldolase family. As to quaternary structure, homotetramer. Interacts with ATP6V1E1. May interact with PLD2.

It catalyses the reaction beta-D-fructose 1,6-bisphosphate = D-glyceraldehyde 3-phosphate + dihydroxyacetone phosphate. It functions in the pathway carbohydrate degradation; glycolysis; D-glyceraldehyde 3-phosphate and glycerone phosphate from D-glucose: step 4/4. The sequence is that of Fructose-bisphosphate aldolase C (ALDOC) from Homo sapiens (Human).